The following is a 76-amino-acid chain: Omega-conotoxin-like TeA61 (76 aa).

Residues M1 to A22 form the signal peptide. Residues D23–R51 constitute a propeptide that is removed on maturation. Intrachain disulfides connect C52–C67, C59–C70, and C66–C75.

The protein belongs to the conotoxin O1 superfamily. As to expression, expressed by the venom duct.

The protein localises to the secreted. Its function is as follows. Omega-conotoxins act at presynaptic membranes, they bind and block voltage-gated calcium channels (Cav). The chain is Omega-conotoxin-like TeA61 from Conus textile (Cloth-of-gold cone).